A 354-amino-acid polypeptide reads, in one-letter code: Uroporphyrinogen decarboxylase (354 aa).

Substrate-binding positions include 27 to 31, Asp77, Tyr154, Thr209, and His327; that span reads RQAGR.

It belongs to the uroporphyrinogen decarboxylase family. Homodimer.

Its subcellular location is the cytoplasm. It catalyses the reaction uroporphyrinogen III + 4 H(+) = coproporphyrinogen III + 4 CO2. It participates in porphyrin-containing compound metabolism; protoporphyrin-IX biosynthesis; coproporphyrinogen-III from 5-aminolevulinate: step 4/4. In terms of biological role, catalyzes the decarboxylation of four acetate groups of uroporphyrinogen-III to yield coproporphyrinogen-III. The chain is Uroporphyrinogen decarboxylase from Salmonella dublin (strain CT_02021853).